The sequence spans 157 residues: Phosphopantetheine adenylyltransferase (157 aa).

It belongs to the eukaryotic CoaD family.

It localises to the cytoplasm. It carries out the reaction (R)-4'-phosphopantetheine + ATP + H(+) = 3'-dephospho-CoA + diphosphate. It participates in cofactor biosynthesis; coenzyme A biosynthesis. Functionally, reversibly transfers an adenylyl group from ATP to 4'-phosphopantetheine, yielding dephospho-CoA (dPCoA) and pyrophosphate. The polypeptide is Phosphopantetheine adenylyltransferase (Methanopyrus kandleri (strain AV19 / DSM 6324 / JCM 9639 / NBRC 100938)).